We begin with the raw amino-acid sequence, 485 residues long: N-succinylglutamate 5-semialdehyde dehydrogenase (485 aa).

An NAD(+)-binding site is contributed by 220 to 225 (GSANTG). Catalysis depends on residues Glu-243 and Cys-278.

The protein belongs to the aldehyde dehydrogenase family. AstD subfamily.

The enzyme catalyses N-succinyl-L-glutamate 5-semialdehyde + NAD(+) + H2O = N-succinyl-L-glutamate + NADH + 2 H(+). It participates in amino-acid degradation; L-arginine degradation via AST pathway; L-glutamate and succinate from L-arginine: step 4/5. Catalyzes the NAD-dependent reduction of succinylglutamate semialdehyde into succinylglutamate. In Vibrio cholerae serotype O1 (strain ATCC 39541 / Classical Ogawa 395 / O395), this protein is N-succinylglutamate 5-semialdehyde dehydrogenase.